The primary structure comprises 274 residues: tRNA pseudouridine synthase A (274 aa).

The Nucleophile role is filled by Asp-52. Residue Tyr-110 coordinates substrate.

This sequence belongs to the tRNA pseudouridine synthase TruA family. Homodimer.

The catalysed reaction is uridine(38/39/40) in tRNA = pseudouridine(38/39/40) in tRNA. Formation of pseudouridine at positions 38, 39 and 40 in the anticodon stem and loop of transfer RNAs. In Ralstonia nicotianae (strain ATCC BAA-1114 / GMI1000) (Ralstonia solanacearum), this protein is tRNA pseudouridine synthase A.